The following is a 100-amino-acid chain: Aspartyl/glutamyl-tRNA(Asn/Gln) amidotransferase subunit C (100 aa).

The protein belongs to the GatC family. Heterotrimer of A, B and C subunits.

It catalyses the reaction L-glutamyl-tRNA(Gln) + L-glutamine + ATP + H2O = L-glutaminyl-tRNA(Gln) + L-glutamate + ADP + phosphate + H(+). It carries out the reaction L-aspartyl-tRNA(Asn) + L-glutamine + ATP + H2O = L-asparaginyl-tRNA(Asn) + L-glutamate + ADP + phosphate + 2 H(+). Allows the formation of correctly charged Asn-tRNA(Asn) or Gln-tRNA(Gln) through the transamidation of misacylated Asp-tRNA(Asn) or Glu-tRNA(Gln) in organisms which lack either or both of asparaginyl-tRNA or glutaminyl-tRNA synthetases. The reaction takes place in the presence of glutamine and ATP through an activated phospho-Asp-tRNA(Asn) or phospho-Glu-tRNA(Gln). This chain is Aspartyl/glutamyl-tRNA(Asn/Gln) amidotransferase subunit C, found in Streptococcus mutans serotype c (strain ATCC 700610 / UA159).